A 281-amino-acid chain; its full sequence is Glycerol uptake facilitator protein (281 aa).

At 1–5 the chain is on the cytoplasmic side; sequence MSQTS. A helical transmembrane segment spans residues 6 to 34; the sequence is TLKGQCIAEFLGTGLLIFFGVGCVAALKV. Over 35-39 the chain is Periplasmic; that stretch reads AGASF. The helical transmembrane segment at 40–60 threads the bilayer; the sequence is GQWEISVIWGLGVAMAIYLTA. The Cytoplasmic segment spans residues 61–63; sequence GVS. An intramembrane segment occupies 64–67; it reads GAHL. The NPA 1 signature appears at 68–70; sequence NPA. The segment at residues 68–78 is an intramembrane region (helical); the sequence is NPAVTIALWLF. The Cytoplasmic portion of the chain corresponds to 79–84; sequence ACFDKR. A helical membrane pass occupies residues 85-108; the sequence is KVIPFIVSQVAGAFCAAALVYGLY. Topologically, residues 109–143 are periplasmic; that stretch reads YNLFFDFEQTHHIVRGSVESVDLAGTFSTYPNPHI. Residues 144–169 form a helical membrane-spanning segment; sequence NFVQAFAVEMVITAILMGLILALTDD. Residues 170-177 lie on the Cytoplasmic side of the membrane; that stretch reads GNGVPRGP. Residues 178–194 form a helical membrane-spanning segment; sequence LAPLLIGLLIAVIGASM. Residues 195–198 are Periplasmic-facing; sequence GPLT. The stretch at 199–202 is an intramembrane region; sequence GFAM. The NPA 2 motif lies at 203–205; that stretch reads NPA. The helical intramembrane region spans 203–216; the sequence is NPARDFGPKVFAWL. At 217–231 the chain is on the periplasmic side; the sequence is AGWGNVAFTGGRDIP. Residues 232–254 traverse the membrane as a helical segment; that stretch reads YFLVPLFSPIVGAIVGAFAYRKL. Residues 255–281 lie on the Cytoplasmic side of the membrane; it reads IGRHLPCDICVVEEKETTTPSEQKASL.

It belongs to the MIP/aquaporin (TC 1.A.8) family. Homotetramer.

It is found in the cell inner membrane. The catalysed reaction is glycerol(in) = glycerol(out). Its function is as follows. Mediates glycerol diffusion across the cytoplasmic membrane via a pore-type mechanism. The polypeptide is Glycerol uptake facilitator protein (glpF) (Shigella flexneri).